A 139-amino-acid chain; its full sequence is uncharacterized protein (139 aa).

To E.coli YecT.

This is an uncharacterized protein from Rhizobium meliloti (strain 1021) (Ensifer meliloti).